Consider the following 330-residue polypeptide: Ferredoxin--NADP reductase (330 aa).

Residues Thr18, Glu37, Gln45, Tyr50, Val90, Phe124, Asp286, and Thr327 each contribute to the FAD site.

Belongs to the ferredoxin--NADP reductase type 2 family. As to quaternary structure, homodimer. Requires FAD as cofactor.

It carries out the reaction 2 reduced [2Fe-2S]-[ferredoxin] + NADP(+) + H(+) = 2 oxidized [2Fe-2S]-[ferredoxin] + NADPH. The protein is Ferredoxin--NADP reductase of Halalkalibacterium halodurans (strain ATCC BAA-125 / DSM 18197 / FERM 7344 / JCM 9153 / C-125) (Bacillus halodurans).